A 183-amino-acid polypeptide reads, in one-letter code: UPF0316 protein EF_1609 (183 aa).

3 consecutive transmembrane segments (helical) span residues 1–21 (MVVD…YITL), 35–55 (VIAP…LSMV), and 62–82 (PLNL…GIKI).

It belongs to the UPF0316 family.

It localises to the cell membrane. The sequence is that of UPF0316 protein EF_1609 from Enterococcus faecalis (strain ATCC 700802 / V583).